Reading from the N-terminus, the 137-residue chain is Large ribosomal subunit protein uL16 (137 aa).

It belongs to the universal ribosomal protein uL16 family. Part of the 50S ribosomal subunit.

Binds 23S rRNA and is also seen to make contacts with the A and possibly P site tRNAs. The protein is Large ribosomal subunit protein uL16 of Acinetobacter baumannii (strain SDF).